A 221-amino-acid polypeptide reads, in one-letter code: Max dimerization protein 1 (221 aa).

Positions 21-49 (RREREAEHGYASMLPYNNKDRDALKRRNK) match the Nuclear localization signal motif. 2 disordered regions span residues 30–68 (YASM…EKNR) and 173–204 (TGDL…YSST). The bHLH domain maps to 56-108 (SSRSTHNEMEKNRRAHLRLCLEKLKGLVPLGPESSRHTTLSLLTKAKLHIKKL). A compositionally biased stretch (low complexity) spans 175 to 184 (DLDWSSSSVS). Polar residues predominate over residues 191-204 (SMQSLGSDEGYSST).

In terms of assembly, heterodimer with MAX; the interaction is required for DNA-binding. DNA binding requires dimerization with another bHLH protein; does not form homodimers, and does not bind to DNA in the absence of MAX in vitro. Interacts with RNF17. Post-translationally, ubiquitinated by BIRC2/c-IAP1, leading to its subsequent degradation by the proteasome.

The protein localises to the nucleus. Functionally, component of a transcriptional repressor complex together with MAX. In complex with MAX binds to the core DNA sequence 5'-CAC[GA]TG-3'. Antagonizes MYC transcriptional activity by competing with MYC for MAX binding. Binds to the TERT promoter and represses telomerase expression, possibly by interfering with MYC binding. The polypeptide is Max dimerization protein 1 (MXD1) (Homo sapiens (Human)).